Here is a 304-residue protein sequence, read N- to C-terminus: Glucose-6-phosphate isomerase (304 aa).

Catalysis depends on Glu146, which acts as the Proton donor. His177 is a catalytic residue.

The protein belongs to the GPI family.

The protein resides in the cytoplasm. It catalyses the reaction alpha-D-glucose 6-phosphate = beta-D-fructose 6-phosphate. Its pathway is carbohydrate degradation; glycolysis; D-glyceraldehyde 3-phosphate and glycerone phosphate from D-glucose: step 2/4. This is Glucose-6-phosphate isomerase (PGI) from Calanus finmarchicus (Calanus tonsus).